Consider the following 191-residue polypeptide: Elongation factor P (191 aa).

Belongs to the elongation factor P family.

It localises to the cytoplasm. It functions in the pathway protein biosynthesis; polypeptide chain elongation. Involved in peptide bond synthesis. Stimulates efficient translation and peptide-bond synthesis on native or reconstituted 70S ribosomes in vitro. Probably functions indirectly by altering the affinity of the ribosome for aminoacyl-tRNA, thus increasing their reactivity as acceptors for peptidyl transferase. In Janthinobacterium sp. (strain Marseille) (Minibacterium massiliensis), this protein is Elongation factor P.